Consider the following 561-residue polypeptide: Zinc finger protein 37A (561 aa).

One can recognise a KRAB domain in the interval 8 to 79; that stretch reads VSFRDVTVGF…EEKFPSQSHL (72 aa). The C2H2-type 1; degenerate zinc-finger motif lies at 146 to 168; sequence FEYNECGKAFPENSLFLVHKRGY. Residues 243 to 265 form a C2H2-type 2; degenerate zinc finger; the sequence is IEYNECGTFFSEKLVLHLQQRTH. 10 consecutive C2H2-type zinc fingers follow at residues 271-293, 299-321, 327-349, 355-377, 383-405, 411-433, 439-461, 467-489, 495-517, and 523-545; these read YECH…QRTH, YECH…QRIH, YGCH…QRTH, YECH…QKTH, YECY…QRIH, YECN…LRTH, YECI…LRRH, FGCN…QRTH, YGCN…HRTH, and YECN…QRIH.

The protein belongs to the krueppel C2H2-type zinc-finger protein family.

Its subcellular location is the nucleus. Functionally, may be involved in transcriptional regulation. The chain is Zinc finger protein 37A (ZNF37A) from Homo sapiens (Human).